Consider the following 508-residue polypeptide: POTE ankyrin domain family member G (508 aa).

5 ANK repeats span residues 172–201 (QKRT…QLNI), 205–234 (KKRT…DPNI), 238–267 (YGNT…DIES), 271–300 (HGLT…NLNA), and 304–333 (YGRT…DVSS). Polar residues predominate over residues 367–376 (KVSSENSNPE). The tract at residues 367–488 (KVSSENSNPE…QLSEEQNTGI (122 aa)) is disordered. Basic and acidic residues-rich tracts occupy residues 377–392 (QDLK…RLKG) and 406–421 (EINK…EMKK). Positions 476-488 (TQKQLSEEQNTGI) are enriched in polar residues.

Belongs to the POTE family.

The sequence is that of POTE ankyrin domain family member G (POTEG) from Homo sapiens (Human).